A 388-amino-acid polypeptide reads, in one-letter code: 4-hydroxy-tetrahydrodipicolinate synthase 1, chloroplastic (388 aa).

A disordered region spans residues 1–51 (MPYLQPPRPHPHPHPTSRLSRASPPSPFPFFPAGTSRSGRLQPVPVSGHSA). The N-terminal 62 residues, 1-62 (MPYLQPPRPH…RVSKGKFAVA (62 aa)), are a transit peptide targeting the chloroplast. T131 provides a ligand contact to pyruvate. Y217 serves as the catalytic Proton donor/acceptor. The Schiff-base intermediate with substrate role is filled by K245. Position 284 (I284) interacts with pyruvate.

This sequence belongs to the DapA family. As to quaternary structure, tetramer of modified subunits derived from two genes in different combinations.

The protein localises to the plastid. The protein resides in the chloroplast. The catalysed reaction is L-aspartate 4-semialdehyde + pyruvate = (2S,4S)-4-hydroxy-2,3,4,5-tetrahydrodipicolinate + H2O + H(+). The protein operates within amino-acid biosynthesis; L-lysine biosynthesis via DAP pathway; (S)-tetrahydrodipicolinate from L-aspartate: step 3/4. Its activity is regulated as follows. Sensitive to lysine inhibition. This inhibition increase in an allosteric manner with increasing concentration of the inhibitor. In terms of biological role, catalyzes the condensation of (S)-aspartate-beta-semialdehyde [(S)-ASA] and pyruvate to 4-hydroxy-tetrahydrodipicolinate (HTPA). This is 4-hydroxy-tetrahydrodipicolinate synthase 1, chloroplastic from Triticum aestivum (Wheat).